A 216-amino-acid polypeptide reads, in one-letter code: Maintenance of carboxysome distribution protein A (216 aa).

Residues G18, G19, G21, K22, T23, T24, and Q47 each coordinate ATP. T23 provides a ligand contact to Mg(2+).

It belongs to the ParA family. McdA subfamily. As to quaternary structure, homodimerizes in the presence of ATP. Each subunit binds 1 ATP molecule; some residues cross the dimer interface to contact ATP in the other subunit. Forms a complex with McdB.

The protein resides in the cytoplasm. It localises to the nucleoid. It carries out the reaction ATP + H2O = ADP + phosphate + H(+). In terms of biological role, mcdA and McdB together mediate carboxysome (Cb) spacing, size, ultrastructure and probably inheritance in the cell, together they prevent Cb aggregation. McdA is an ATPase that forms dynamic gradients on the nucleoid in response to adapter protein McdB, which associates with carboxysomes. The interplay between McdA gradients on the nucleoid and McdB-bound carboxysomes result in the equal spacing of Cbs along the cell length. Its function is as follows. Incorrect positioning (aggregation) of carboxysomes results in reduced CO(2) fixation by encapsulated ribulose-1,5-bisphosphate carboxylase (RuBisCO, cbbL/cbbS), which leads to slower growth. The chain is Maintenance of carboxysome distribution protein A from Gloeobacter kilaueensis (strain ATCC BAA-2537 / CCAP 1431/1 / ULC 316 / JS1).